Reading from the N-terminus, the 115-residue chain is Thrombospondin type-1 domain-containing protein 8 (115 aa).

The first 21 residues, 1–21, serve as a signal peptide directing secretion; sequence MARTPGALLLAPLLLLQLATP. The 52-residue stretch at 53 to 104 folds into the TSP type-1 domain; sequence DSILGPWGKWRCLCDLGKQERSREVVGTAPGPVFMDPEKLIQLRPCRQRDCP.

This chain is Thrombospondin type-1 domain-containing protein 8, found in Homo sapiens (Human).